The following is a 1832-amino-acid chain: Multifunctional protein pyr-3 (1832 aa).

Residues 2-400 (AATVYRPATA…PGPRDTEFLF (399 aa)) are GATase (Glutamine amidotransferase). L-glutamine-binding residues include S64, G273, and G275. Residues 228–413 (RILCLDVGMK…IQTVAKCTTD (186 aa)) enclose the Glutamine amidotransferase type-1 domain. Catalysis depends on C302, which acts as the Nucleophile; for GATase activity. The L-glutamine site is built by L303, Q306, N344, G346, and Y347. Active-site for GATase activity residues include H386 and E388. Residues 401-442 (DVFIQTVAKCTTDNTLLQKGVEFPGGTTEENERLHPRVDVKK) form a linker region. Residues 443-983 (VLVLGSGGLS…SEHDVSFEDR (541 aa)) form a CPSase A region. The interval 443–1484 (VLVLGSGGLS…TNVKNAKILV (1042 aa)) is CPSase (Carbamoyl phosphate synthase). Residues R560, R600, G606, G607, R637, M639, E644, G670, I671, H672, Q713, and E727 each contribute to the ATP site. 2 ATP-grasp domains span residues 564-756 (ARSM…KLGL) and 1102-1293 (SRML…KAIM). Residues Q713, E727, and N729 each coordinate Mg(2+). Residues Q713, E727, and N729 each coordinate Mn(2+). The CPSase B stretch occupies residues 984–1484 (GVMVLGSGVY…TNVKNAKILV (501 aa)). ATP-binding residues include R1138, K1177, I1179, E1184, G1209, V1210, H1211, S1212, Q1252, and E1264. Mg(2+) is bound by residues Q1252, E1264, and N1266. Mn(2+) is bound by residues Q1252, E1264, and N1266. In terms of domain architecture, MGS-like spans 1359 to 1507 (FKVPKKNILL…RDYQTSHTPL (149 aa)). A linker region spans residues 1485-1528 (EAIARYRDMEIGERDYQTSHTPLQLSGQVNFTLQDSLSRPHSFK). The ATCase (Aspartate transcarbamylase) stretch occupies residues 1529–1832 (KAHVLSVEQY…MALLALVMSG (304 aa)). Carbamoyl phosphate contacts are provided by R1581 and T1582. Position 1609 (K1609) interacts with L-aspartate. 3 residues coordinate carbamoyl phosphate: R1630, H1658, and Q1661. Positions 1691 and 1754 each coordinate L-aspartate. Carbamoyl phosphate contacts are provided by L1793 and P1794.

It in the N-terminal section; belongs to the CarA family. The protein in the central section; belongs to the CarB family. This sequence in the C-terminal section; belongs to the aspartate/ornithine carbamoyltransferase superfamily. ATCase family. Mg(2+) serves as cofactor. Requires Mn(2+) as cofactor.

The protein resides in the cytoplasm. It localises to the nucleus. The enzyme catalyses hydrogencarbonate + L-glutamine + 2 ATP + H2O = carbamoyl phosphate + L-glutamate + 2 ADP + phosphate + 2 H(+). It catalyses the reaction L-glutamine + H2O = L-glutamate + NH4(+). It carries out the reaction hydrogencarbonate + NH4(+) + 2 ATP = carbamoyl phosphate + 2 ADP + phosphate + 2 H(+). The catalysed reaction is carbamoyl phosphate + L-aspartate = N-carbamoyl-L-aspartate + phosphate + H(+). Its pathway is pyrimidine metabolism; UMP biosynthesis via de novo pathway; (S)-dihydroorotate from bicarbonate: step 1/3. It functions in the pathway pyrimidine metabolism; UMP biosynthesis via de novo pathway; (S)-dihydroorotate from bicarbonate: step 2/3. Both CPSase and ATCase activities are feedback inhibited by the end product UTP. Multifunctional protein that encodes the first 2 enzymatic activities of the de novo pyrimidine pathway: carbamoylphosphate synthetase (CPSase; EC 6.3.5.5) and aspartate transcarbamylase (ATCase; EC 2.1.3.2). The CPSase-function is accomplished in 2 steps, by a glutamine-dependent amidotransferase activity (GATase) that binds and cleaves glutamine to produce ammonia, followed by an ammonium-dependent carbamoyl phosphate synthetase, which reacts with the ammonia, hydrogencarbonate and ATP to form carbamoyl phosphate. The endogenously produced carbamoyl phosphate is sequestered and channeled to the ATCase active site. ATCase then catalyzes the formation of carbamoyl-L-aspartate from L-aspartate and carbamoyl phosphate. In Neurospora crassa (strain ATCC 24698 / 74-OR23-1A / CBS 708.71 / DSM 1257 / FGSC 987), this protein is Multifunctional protein pyr-3 (pyr-3).